A 419-amino-acid polypeptide reads, in one-letter code: Testin (419 aa).

The 108-residue stretch at 92–199 (MILTNPVAAK…GDVKLPSEMN (108 aa)) folds into the PET domain. Disordered stretches follow at residues 133 to 164 (EKQP…PSKC) and 199 to 222 (NAQG…GSKD). A compositionally biased stretch (basic and acidic residues) spans 155–164 (PAHDQDPSKC). 3 consecutive LIM zinc-binding domains span residues 232-295 (YSCY…CDSE), 297-357 (PRCA…NHAV), and 360-419 (QGCH…KMMS).

The protein belongs to the prickle / espinas / testin family. Interacts via LIM domain 1 with ZYX. Interacts (via LIM domain 3) with ENAH and VASP. Interacts with ALKBH4, talin, actin, alpha-actinin, GRIP1 and PXN. Interacts (via LIM domain 2) with ACTL7A (via N-terminus). Heterodimer with ACTL7A; the heterodimer interacts with ENAH to form a heterotrimer.

The protein localises to the cytoplasm. It is found in the cell junction. The protein resides in the focal adhesion. Scaffold protein that may play a role in cell adhesion, cell spreading and in the reorganization of the actin cytoskeleton. Plays a role in the regulation of cell proliferation. May act as a tumor suppressor. This is Testin (Tes) from Rattus norvegicus (Rat).